We begin with the raw amino-acid sequence, 154 residues long: Deoxyuridine 5'-triphosphate nucleotidohydrolase (154 aa).

Substrate is bound by residues 72–74 (RSG), Asn85, 89–91 (LID), and Met99.

The protein belongs to the dUTPase family. It depends on Mg(2+) as a cofactor.

The enzyme catalyses dUTP + H2O = dUMP + diphosphate + H(+). Its pathway is pyrimidine metabolism; dUMP biosynthesis; dUMP from dCTP (dUTP route): step 2/2. This enzyme is involved in nucleotide metabolism: it produces dUMP, the immediate precursor of thymidine nucleotides and it decreases the intracellular concentration of dUTP so that uracil cannot be incorporated into DNA. This chain is Deoxyuridine 5'-triphosphate nucleotidohydrolase, found in Psychrobacter cryohalolentis (strain ATCC BAA-1226 / DSM 17306 / VKM B-2378 / K5).